A 338-amino-acid chain; its full sequence is Biotin synthase (338 aa).

A Radical SAM core domain is found at 63-290; that stretch reads NGVQLSTLLS…RAKVRLSAGR (228 aa). Residues C78, C82, and C85 each contribute to the [4Fe-4S] cluster site. [2Fe-2S] cluster is bound by residues C122, C153, C213, and R285.

This sequence belongs to the radical SAM superfamily. Biotin synthase family. In terms of assembly, homodimer. [4Fe-4S] cluster is required as a cofactor. It depends on [2Fe-2S] cluster as a cofactor.

The enzyme catalyses (4R,5S)-dethiobiotin + (sulfur carrier)-SH + 2 reduced [2Fe-2S]-[ferredoxin] + 2 S-adenosyl-L-methionine = (sulfur carrier)-H + biotin + 2 5'-deoxyadenosine + 2 L-methionine + 2 oxidized [2Fe-2S]-[ferredoxin]. It participates in cofactor biosynthesis; biotin biosynthesis; biotin from 7,8-diaminononanoate: step 2/2. Functionally, catalyzes the conversion of dethiobiotin (DTB) to biotin by the insertion of a sulfur atom into dethiobiotin via a radical-based mechanism. The sequence is that of Biotin synthase from Nitrosomonas eutropha (strain DSM 101675 / C91 / Nm57).